The sequence spans 554 residues: Carboxypeptidase Y homolog A (554 aa).

The first 17 residues, 1–17 (MRIAASTVLFGAASAAS), serve as a signal peptide directing secretion. Residues 18–137 (FQQQAQHVLS…RLEEYNLRVK (120 aa)) constitute a propeptide that is removed on maturation. 5 disulfides stabilise this stretch: C191/C431, C325/C339, C349/C372, C356/C365, and C394/C401. Residue N222 is glycosylated (N-linked (GlcNAc...) asparagine). S278 is an active-site residue. The active site involves D470. N-linked (GlcNAc...) asparagine glycosylation is present at N518. H529 is an active-site residue.

It belongs to the peptidase S10 family.

It is found in the vacuole. It carries out the reaction Release of a C-terminal amino acid with broad specificity.. Functionally, vacuolar carboxypeptidase involved in degradation of small peptides. Digests preferentially peptides containing an aliphatic or hydrophobic residue in P1' position, as well as methionine, leucine or phenylalanine in P1 position of ester substrate. The polypeptide is Carboxypeptidase Y homolog A (CPYA) (Chaetomium globosum (strain ATCC 6205 / CBS 148.51 / DSM 1962 / NBRC 6347 / NRRL 1970) (Soil fungus)).